A 530-amino-acid chain; its full sequence is Vesicular acetylcholine transporter (530 aa).

Residues 1 to 33 lie on the Cytoplasmic side of the membrane; that stretch reads MEPTAPTGQARAAATKLSEAVGAALQEPQRQRR. Residues 34–54 traverse the membrane as a helical segment; sequence LVLVIVCVALLLDNMLYMVIV. The Lumenal, vesicle portion of the chain corresponds to 55–125; sequence PIVPDYIAHM…PTESEDVKIG (71 aa). N-linked (GlcNAc...) asparagine glycosylation is found at Asn89 and Asn96. A helical transmembrane segment spans residues 126 to 146; sequence VLFASKAILQLLVNPLSGPFI. The Cytoplasmic portion of the chain corresponds to 147 to 152; the sequence is DRMSYD. The chain crosses the membrane as a helical span at residues 153–173; sequence VPLLIGLGVMFASTVMFAFAE. Topologically, residues 174–182 are lumenal, vesicle; that stretch reads DYATLFAAR. A helical membrane pass occupies residues 183–203; that stretch reads SLQGLGSAFADTSGIAMIADK. Over 204-213 the chain is Cytoplasmic; sequence YPEEPERSRA. Residues 214–234 traverse the membrane as a helical segment; it reads LGVALAFISFGSLVAPPFGGI. Over 235–242 the chain is Lumenal, vesicle; that stretch reads LYEFAGKR. A helical membrane pass occupies residues 243–263; sequence VPFLVLAAVSLFDALLLLAVA. Residues 264–289 lie on the Cytoplasmic side of the membrane; sequence KPFSAAARARANLPVGTPIHRLMLDP. Residues 290-310 form a helical membrane-spanning segment; that stretch reads YIAVVAGALTTCNIPLAFLEP. The Lumenal, vesicle segment spans residues 311–325; the sequence is TIATWMKHTMAASEW. The helical transmembrane segment at 326 to 346 threads the bilayer; the sequence is EMGMVWLPAFVPHVLGVYLTV. The Cytoplasmic segment spans residues 347–356; it reads RLAARYPHLQ. The helical transmembrane segment at 357-377 threads the bilayer; sequence WLYGALGLAVIGVSSCVVPAC. Over 378 to 388 the chain is Lumenal, vesicle; sequence RSFAPLVVSLC. The helical transmembrane segment at 389-409 threads the bilayer; sequence GLCFGIALVDTALLPTLAFLV. Over 410–422 the chain is Cytoplasmic; it reads DVRHVSVYGSVYA. Residues 423–443 form a helical membrane-spanning segment; it reads IADISYSVAYALGPIVAGHIV. At 444–447 the chain is on the lumenal, vesicle side; that stretch reads HSLG. Residues 448–468 traverse the membrane as a helical segment; that stretch reads FEQLSLGMGLANLLYAPVLLL. Topologically, residues 469–530 are cytoplasmic; sequence LRNVGLLTRS…EDDYNYYSRS (62 aa). The mediates interaction with SEC14L1 stretch occupies residues 471–530; the sequence is NVGLLTRSRSERDVLLDEPPQGLYDAVRLREVQGKDGGEPCSPPGPFDGCEDDYNYYSRS. Residues 504-530 are disordered; the sequence is GKDGGEPCSPPGPFDGCEDDYNYYSRS.

The protein belongs to the major facilitator superfamily. Vesicular transporter family. Interacts with SEC14L1. In terms of tissue distribution, high expression in all major cholinergic cell groups, including peripheral postganglionic parasympathetic cells, preganglionic sympathetic and parasympathetic cells, ventral spinal cord and brainstem motoneurons, cell groups in the basal forebrain, the habenula and the corpus striatum. Weakly expressed in the cortex and hippocampus.

It is found in the cytoplasmic vesicle. The protein localises to the secretory vesicle. Its subcellular location is the synaptic vesicle membrane. The catalysed reaction is acetylcholine(out) + 2 H(+)(in) = acetylcholine(in) + 2 H(+)(out). The enzyme catalyses choline(in) + 2 H(+)(out) = choline(out) + 2 H(+)(in). It catalyses the reaction serotonin(in) + 2 H(+)(out) = serotonin(out) + 2 H(+)(in). Its activity is regulated as follows. Potently inhibited by L-vesamicol. Functionally, electrogenic antiporter that exchanges one cholinergic neurotransmitter, acetylcholine or choline, with two intravesicular protons across the membrane of synaptic vesicles. Uses the electrochemical proton gradient established by the V-type proton-pump ATPase to store neurotransmitters inside the vesicles prior to their release via exocytosis. Determines cholinergic vesicular quantal size at presynaptic nerve terminals in developing neuro-muscular junctions with an impact on motor neuron differentiation and innervation pattern. Part of forebrain cholinergic system, regulates hippocampal synapse transmissions that underlie spatial memory formation. Can transport serotonin. This Rattus norvegicus (Rat) protein is Vesicular acetylcholine transporter (Slc18a3).